The following is a 329-amino-acid chain: Lipoyl synthase (329 aa).

[4Fe-4S] cluster is bound by residues cysteine 55, cysteine 60, cysteine 66, cysteine 81, cysteine 85, cysteine 88, and serine 292. The Radical SAM core domain maps to 67–281; sequence WEDREATFLI…RDEAEAIGFL (215 aa).

This sequence belongs to the radical SAM superfamily. Lipoyl synthase family. The cofactor is [4Fe-4S] cluster.

The protein localises to the cytoplasm. It catalyses the reaction [[Fe-S] cluster scaffold protein carrying a second [4Fe-4S](2+) cluster] + N(6)-octanoyl-L-lysyl-[protein] + 2 oxidized [2Fe-2S]-[ferredoxin] + 2 S-adenosyl-L-methionine + 4 H(+) = [[Fe-S] cluster scaffold protein] + N(6)-[(R)-dihydrolipoyl]-L-lysyl-[protein] + 4 Fe(3+) + 2 hydrogen sulfide + 2 5'-deoxyadenosine + 2 L-methionine + 2 reduced [2Fe-2S]-[ferredoxin]. It functions in the pathway protein modification; protein lipoylation via endogenous pathway; protein N(6)-(lipoyl)lysine from octanoyl-[acyl-carrier-protein]: step 2/2. Catalyzes the radical-mediated insertion of two sulfur atoms into the C-6 and C-8 positions of the octanoyl moiety bound to the lipoyl domains of lipoate-dependent enzymes, thereby converting the octanoylated domains into lipoylated derivatives. The polypeptide is Lipoyl synthase (Leifsonia xyli subsp. xyli (strain CTCB07)).